A 214-amino-acid chain; its full sequence is Large ribosomal subunit protein uL3 (214 aa).

Glutamine 153 carries the post-translational modification N5-methylglutamine.

Belongs to the universal ribosomal protein uL3 family. As to quaternary structure, part of the 50S ribosomal subunit. Forms a cluster with proteins L14 and L19. Methylated by PrmB.

Functionally, one of the primary rRNA binding proteins, it binds directly near the 3'-end of the 23S rRNA, where it nucleates assembly of the 50S subunit. The sequence is that of Large ribosomal subunit protein uL3 from Methylobacillus flagellatus (strain ATCC 51484 / DSM 6875 / VKM B-1610 / KT).